A 404-amino-acid polypeptide reads, in one-letter code: Adenylosuccinate synthetase (404 aa).

Residues 12 to 18 (GDEGKGK) and 40 to 42 (GHT) each bind GTP. Aspartate 13 acts as the Proton acceptor in catalysis. 2 residues coordinate Mg(2+): aspartate 13 and glycine 40. IMP contacts are provided by residues 13-16 (DEGK), 38-41 (NAGH), threonine 121, arginine 135, glutamine 213, threonine 228, and arginine 296. The Proton donor role is filled by histidine 41. 292–298 (TTTGRAR) lines the substrate pocket. GTP is bound by residues arginine 298, 324–326 (KMD), and 389–391 (SCG).

It belongs to the adenylosuccinate synthetase family. Homodimer. Mg(2+) serves as cofactor.

The protein resides in the cytoplasm. It catalyses the reaction IMP + L-aspartate + GTP = N(6)-(1,2-dicarboxyethyl)-AMP + GDP + phosphate + 2 H(+). It participates in purine metabolism; AMP biosynthesis via de novo pathway; AMP from IMP: step 1/2. Plays an important role in the de novo pathway of purine nucleotide biosynthesis. Catalyzes the first committed step in the biosynthesis of AMP from IMP. The polypeptide is Adenylosuccinate synthetase (Deinococcus geothermalis (strain DSM 11300 / CIP 105573 / AG-3a)).